The sequence spans 210 residues: Acetoin utilization protein AcuA (210 aa).

The region spanning 20–161 is the N-acetyltransferase domain; that stretch reads LIEGPVSPED…YRKIMEKMMN (142 aa).

This sequence belongs to the acetyltransferase family. As to quaternary structure, monomer.

It functions in the pathway ketone degradation; acetoin degradation. Activity is sensitive to salt concentration, a high concentration of KCL (500 mM) is needed for complete inactivation. Functionally, part of the acuABC operon, which is possibly involved in the breakdown of acetoin and butanediol. Acts as an acetyltransferase inactivating acetyl-CoA synthetase AcsA via acetylation at a Lys residue. In Bacillus subtilis (strain 168), this protein is Acetoin utilization protein AcuA (acuA).